The chain runs to 124 residues: Fluoride-specific ion channel FluC (124 aa).

4 helical membrane-spanning segments follow: residues 5–25 (ILAV…AGTW), 37–57 (ATLA…GLFL), 69–89 (GLIV…LDTL), and 99–119 (LALG…WAGL). 2 residues coordinate Na(+): Gly76 and Thr79.

Belongs to the fluoride channel Fluc/FEX (TC 1.A.43) family.

Its subcellular location is the cell inner membrane. The catalysed reaction is fluoride(in) = fluoride(out). Its activity is regulated as follows. Na(+) is not transported, but it plays an essential structural role and its presence is essential for fluoride channel function. Functionally, fluoride-specific ion channel. Important for reducing fluoride concentration in the cell, thus reducing its toxicity. This chain is Fluoride-specific ion channel FluC, found in Pseudomonas syringae pv. tomato (strain ATCC BAA-871 / DC3000).